The sequence spans 252 residues: Floral homeotic protein AGAMOUS (252 aa).

The MADS-box domain maps to 19 to 73; the sequence is RGKIEIKRIENTTNRQVTFCKRRNGLLKKAYELSVLCDAEVALIVFSSRGRLYEY. Positions 103–193 constitute a K-box domain; that stretch reads AQYYQQESAK…RAKIAENERN (91 aa).

Its subcellular location is the nucleus. In terms of biological role, probable transcription factor involved in regulating genes that determines stamen and carpel development in wild-type flowers. The polypeptide is Floral homeotic protein AGAMOUS (AG1) (Brassica napus (Rape)).